The following is a 551-amino-acid chain: High-affinity glucose transporter (551 aa).

Residues methionine 1–asparagine 27 lie on the Cytoplasmic side of the membrane. Residues isoleucine 28 to serine 48 traverse the membrane as a helical segment. At methionine 49–tyrosine 70 the chain is on the extracellular side. The chain crosses the membrane as a helical span at residues glycine 71–phenylalanine 91. The Cytoplasmic segment spans residues serine 92 to lysine 98. Residues valine 99–glutamine 119 traverse the membrane as a helical segment. The Extracellular portion of the chain corresponds to aspartate 120–methionine 123. The chain crosses the membrane as a helical span at residues leucine 124–valine 144. The Cytoplasmic portion of the chain corresponds to tyrosine 145–arginine 155. A helical transmembrane segment spans residues glycine 156–isoleucine 176. The Extracellular portion of the chain corresponds to glycine 177–arginine 190. The chain crosses the membrane as a helical span at residues isoleucine 191–proline 211. Residues glutamate 212 to glutamine 289 lie on the Cytoplasmic side of the membrane. The chain crosses the membrane as a helical span at residues leucine 290–threonine 310. The Extracellular segment spans residues glycine 311–leucine 315. The chain crosses the membrane as a helical span at residues valine 316–isoleucine 336. Residues aspartate 337–proline 343 lie on the Cytoplasmic side of the membrane. Residues valine 344–alanine 364 form a helical membrane-spanning segment. The Extracellular portion of the chain corresponds to threonine 365–valine 395. The N-linked (GlcNAc...) asparagine glycan is linked to asparagine 388. Residues isoleucine 396–isoleucine 416 traverse the membrane as a helical segment. The Cytoplasmic segment spans residues tyrosine 417–alanine 432. The helical transmembrane segment at leucine 433 to phenylalanine 453 threads the bilayer. At lysine 454–lysine 459 the chain is on the extracellular side. Residues threonine 460 to proline 480 traverse the membrane as a helical segment. Residues glutamate 481 to asparagine 551 are Cytoplasmic-facing.

Belongs to the major facilitator superfamily. Sugar transporter (TC 2.A.1.1) family.

It is found in the membrane. In terms of biological role, high-affinity glucose transporter. This chain is High-affinity glucose transporter (HGT1), found in Kluyveromyces lactis (strain ATCC 8585 / CBS 2359 / DSM 70799 / NBRC 1267 / NRRL Y-1140 / WM37) (Yeast).